We begin with the raw amino-acid sequence, 152 residues long: Small ribosomal subunit protein uS15 (152 aa).

Positions Met1–Gly10 are enriched in basic residues. The tract at residues Met1–Ser26 is disordered. The span at Lys11–Ser26 shows a compositional bias: polar residues.

The protein belongs to the universal ribosomal protein uS15 family. In terms of assembly, part of the 30S ribosomal subunit.

The chain is Small ribosomal subunit protein uS15 from Methanococcoides burtonii (strain DSM 6242 / NBRC 107633 / OCM 468 / ACE-M).